The sequence spans 278 residues: Elongation factor Ts (278 aa).

Residues 79–82 form an involved in Mg(2+) ion dislocation from EF-Tu region; sequence TDFV.

It belongs to the EF-Ts family.

It is found in the cytoplasm. Functionally, associates with the EF-Tu.GDP complex and induces the exchange of GDP to GTP. It remains bound to the aminoacyl-tRNA.EF-Tu.GTP complex up to the GTP hydrolysis stage on the ribosome. The protein is Elongation factor Ts of Borrelia hermsii (strain HS1 / DAH).